The following is a 123-amino-acid chain: Holo-[acyl-carrier-protein] synthase (123 aa).

Asp8 and Glu55 together coordinate Mg(2+).

This sequence belongs to the P-Pant transferase superfamily. AcpS family. It depends on Mg(2+) as a cofactor.

It is found in the cytoplasm. It carries out the reaction apo-[ACP] + CoA = holo-[ACP] + adenosine 3',5'-bisphosphate + H(+). Its function is as follows. Transfers the 4'-phosphopantetheine moiety from coenzyme A to a Ser of acyl-carrier-protein. This is Holo-[acyl-carrier-protein] synthase from Caldicellulosiruptor saccharolyticus (strain ATCC 43494 / DSM 8903 / Tp8T 6331).